The primary structure comprises 657 residues: N-acetylgalactosaminyltransferase 7 (657 aa).

The Cytoplasmic portion of the chain corresponds to 1–6 (MRLKIG). Residues 7-29 (FILRSLLVVGSFLGLVVLWSSLS) form a helical; Signal-anchor for type II membrane protein membrane-spanning segment. Disordered regions lie at residues 30 to 66 (SRPD…DDRF) and 83 to 105 (ESIR…DSQR). Topologically, residues 30–657 (SRPDDQSPLS…KWEMNNIHSV (628 aa)) are lumenal. 5 disulfide bridges follow: C197/C435, C426/C507, C545/C562, C585/C600, and C625/C640. Positions 206–317 (LLTSSVVIVF…VNWYAPLVAP (112 aa)) are catalytic subdomain A. Residues D247 and R277 each contribute to the substrate site. The Mn(2+) site is built by D301 and H303. A catalytic subdomain B region spans residues 381 to 443 (PYRSPAMAGG…PCSRVGHIYR (63 aa)). Substrate is bound at residue W412. H440 contacts Mn(2+). Residue R443 coordinates substrate. Residues 532–652 (VEWGEIRGLE…SKMTQKWEMN (121 aa)) enclose the Ricin B-type lectin domain.

This sequence belongs to the glycosyltransferase 2 family. GalNAc-T subfamily. Mn(2+) serves as cofactor. Highly expressed in sublingual gland. Expressed at lower level in stomach, small intestiine and colon.

Its subcellular location is the golgi apparatus membrane. The catalysed reaction is L-seryl-[protein] + UDP-N-acetyl-alpha-D-galactosamine = a 3-O-[N-acetyl-alpha-D-galactosaminyl]-L-seryl-[protein] + UDP + H(+). It catalyses the reaction L-threonyl-[protein] + UDP-N-acetyl-alpha-D-galactosamine = a 3-O-[N-acetyl-alpha-D-galactosaminyl]-L-threonyl-[protein] + UDP + H(+). Its pathway is protein modification; protein glycosylation. Its function is as follows. Glycopeptide transferase involved in O-linked oligosaccharide biosynthesis, which catalyzes the transfer of an N-acetyl-D-galactosamine residue to an already glycosylated peptide. In contrast to other proteins of the family, it does not act as a peptide transferase that transfers GalNAc onto serine or threonine residue on the protein receptor, but instead requires the prior addition of a GalNAc on a peptide before adding additional GalNAc moieties. Some peptide transferase activity is however not excluded, considering that its appropriate peptide substrate may remain unidentified. In Mus musculus (Mouse), this protein is N-acetylgalactosaminyltransferase 7 (Galnt7).